A 332-amino-acid polypeptide reads, in one-letter code: dTDP-3,4-didehydro-2,6-dideoxy-alpha-D-glucose 3-reductase (332 aa).

Position 17-23 (17-23) interacts with NADP(+); the sequence is CADIAWR. Residue Arg-24 coordinates substrate. Residues 42–43, Tyr-63, Leu-79, and His-84 contribute to the NADP(+) site; that span reads SR. The active-site Proton donor is the Lys-102. Residues Arg-170 and Asp-182 each contribute to the NADP(+) site. Residues Tyr-240 and Thr-260 each contribute to the substrate site.

The protein belongs to the Gfo/Idh/MocA family. Homotetramer; dimer of dimers.

The enzyme catalyses dTDP-4-dehydro-2,6-dideoxy-alpha-D-glucose + NADP(+) = dTDP-3,4-didehydro-2,6-dideoxy-alpha-D-glucose + NADPH + H(+). It functions in the pathway antibiotic biosynthesis. Involved in the biosynthesis of L-digitoxose, an unusual dideoxysugar attached to various pharmacologically active natural products, including the antitumor antibiotic tetrocarcin A, and the antibiotics kijanimicin and jadomycin B. Catalyzes the reduction of the C-3 keto moiety of dTDP-3,4-diketo-2,6-dideoxy-alpha-D-glucose to yield dTDP-4-keto-2,6-dideoxy-alpha-D-glucose. Also able to reduce dTDP-3-keto-6-deoxy-D-galactose and dTDP-3-keto-6-deoxy-D-glucose to yield dTDP-fucose and dTDP-quinovose, respectively. The polypeptide is dTDP-3,4-didehydro-2,6-dideoxy-alpha-D-glucose 3-reductase (Actinomadura kijaniata).